The following is a 37-amino-acid chain: Mu-cyrtautoxin-As1a (37 aa).

Intrachain disulfides connect Cys-1–Cys-15, Cys-8–Cys-19, Cys-14–Cys-35, and Cys-26–Cys-31.

It belongs to the neurotoxin 13 (insecticidal toxin ABC) family. 01 (Aps III) subfamily. In terms of tissue distribution, expressed by the venom gland.

It is found in the secreted. In terms of biological role, the recombinant mu-cyrtautoxin-As1a potently and voltage-independently blocks voltage-gated sodium channels (Nav) of insects. It acts by pluging the outer vestibule of the channel. It acts in combination with a weak (30%) voltage-independent block of insect voltage-gated calcium (Cav) channels (low-voltage and high-voltage channels). Tested on DUM neurons, it inhibits sodium currents with an IC(50) of 540 nM (and a Hill coefficient &gt;1, reflecting an incomplete block at higher concentrations). In vivo, it induces flaccid paralysis in adult Australian sheep blowfly Lucilia cuprina. It is both paralytic and lethal, when injected into lepidopteran larvae. It is a slower acting toxin, being lethal at 24 hours, but not paralytic at 1 hour post-injection. The polypeptide is Mu-cyrtautoxin-As1a (Apomastus schlingeri (Trap-door spider)).